The primary structure comprises 129 residues: Small ribosomal subunit protein uS11 (129 aa).

It belongs to the universal ribosomal protein uS11 family. In terms of assembly, part of the 30S ribosomal subunit. Interacts with proteins S7 and S18. Binds to IF-3.

Its function is as follows. Located on the platform of the 30S subunit, it bridges several disparate RNA helices of the 16S rRNA. Forms part of the Shine-Dalgarno cleft in the 70S ribosome. This chain is Small ribosomal subunit protein uS11, found in Ectopseudomonas mendocina (strain ymp) (Pseudomonas mendocina).